The following is a 201-amino-acid chain: Small ribosomal subunit protein uS4 (201 aa).

Positions Met-1 to Arg-38 are disordered. Residues Ser-91 to Ala-157 form the S4 RNA-binding domain.

The protein belongs to the universal ribosomal protein uS4 family. Part of the 30S ribosomal subunit. Contacts protein S5. The interaction surface between S4 and S5 is involved in control of translational fidelity.

Its function is as follows. One of the primary rRNA binding proteins, it binds directly to 16S rRNA where it nucleates assembly of the body of the 30S subunit. In terms of biological role, with S5 and S12 plays an important role in translational accuracy. The chain is Small ribosomal subunit protein uS4 from Mycobacterium sp. (strain JLS).